The primary structure comprises 172 residues: Small ribosomal subunit protein uS5 (172 aa).

One can recognise an S5 DRBM domain in the interval 15–78 (LNDKLIFINR…ANAKRNLSRI (64 aa)).

It belongs to the universal ribosomal protein uS5 family. Part of the 30S ribosomal subunit. Contacts proteins S4 and S8.

With S4 and S12 plays an important role in translational accuracy. Functionally, located at the back of the 30S subunit body where it stabilizes the conformation of the head with respect to the body. The polypeptide is Small ribosomal subunit protein uS5 (Dehalococcoides mccartyi (strain CBDB1)).